We begin with the raw amino-acid sequence, 194 residues long: Peptidyl-tRNA hydrolase (194 aa).

Y19 serves as a coordination point for tRNA. H24 serves as the catalytic Proton acceptor. Residues F69, N71, and N117 each coordinate tRNA.

This sequence belongs to the PTH family. As to quaternary structure, monomer.

Its subcellular location is the cytoplasm. The catalysed reaction is an N-acyl-L-alpha-aminoacyl-tRNA + H2O = an N-acyl-L-amino acid + a tRNA + H(+). Hydrolyzes ribosome-free peptidyl-tRNAs (with 1 or more amino acids incorporated), which drop off the ribosome during protein synthesis, or as a result of ribosome stalling. Functionally, catalyzes the release of premature peptidyl moieties from peptidyl-tRNA molecules trapped in stalled 50S ribosomal subunits, and thus maintains levels of free tRNAs and 50S ribosomes. The protein is Peptidyl-tRNA hydrolase of Neorickettsia sennetsu (strain ATCC VR-367 / Miyayama) (Ehrlichia sennetsu).